The primary structure comprises 312 residues: Nicotinamide adenine dinucleotide transporter 1, chloroplastic (312 aa).

Solcar repeat units lie at residues 11-103, 111-199, and 211-299; these read KNVL…LKSF, LSVG…IKVY, and LNAR…VHRF. 6 helical membrane passes run 17–37, 78–98, 117–137, 171–191, 216–232, and 271–293; these read AAAG…LDVI, GLSP…TMYD, VLAA…LWVV, GLYS…IQFP, VAVA…TLTY, and FYRG…FTSF.

This sequence belongs to the mitochondrial carrier (TC 2.A.29) family. As to expression, highly expressed in young leaf mesophyll cells, root tips and at the branches of adventitious roots. Low expression in all flower tissues and not detected in siliques and seeds.

It is found in the plastid. The protein resides in the chloroplast membrane. Inhibited by pyridoxal 5'-phosphate, bathophenanthroline, tannic acid, mersalyl, mercuric chloride, p-hydroxymercuribenzoate, p-hydroxymercuribenzoate sulfonate, bromocresol purple and N-ethylmaleimide. Functionally, mediates the NAD(+) import into chloroplast. Favors the NAD(+)(in)/ADP or AMP(out) antiport exchange, but is also able to catalyze a low unidirectional transport (uniport) of NAD(+). Transports NAD(+), nicotinic acid adenine dinucleotide, nicotinamide mononucleotide, nicotinic acid mononucleotide, FAD, FMN, TTP, TDP, TMP, UTP, UDP, UMP, CTP, CDP, CMP, GTP, GDP, GMP, 3'-AMP, ATP, ADP, and AMP, has low transport activity with cAMP, pyrophosphate, NADH and alpha-NAD(+), and has no activity with NADP(+), NADPH, nicotinamide, nicotinic acid, adenosine, thiamine mono- or diphosphate, inorganic phosphate, CoA, folate, NaCl, malate, malonate, citrate, fumarate, aspartate, glutamate, S-adenosylmethionine, lysine, arginine, and ornithine. In Arabidopsis thaliana (Mouse-ear cress), this protein is Nicotinamide adenine dinucleotide transporter 1, chloroplastic (NDT1).